A 440-amino-acid polypeptide reads, in one-letter code: MSDFSQTVPELVAWARKNDFALTLPTERLAFLLAIATLNGERLDGEMSEGDLVDVFRHVSKTFEQTHETVAQRANNAINDLVKQRLLNRFTSELAEGNAIYRLTPLGISISDYYIRQREFSTLRLSMQLSIVAQELRAAGDAAEEGGDEFHWQRNVFAPLKYSVAEIFDSIDLTQRLMDEQQQGVKRDIAGLLTQDWRAAISSCELLLSETSGTLRELQDTLEAAGDKLQANLLRIQDATLGQEALGFVDKLVFDLQAKLDRIISWGQQAIDLWIGYDRHVHKFIRTAIDMDKNRVFAQRLRQSVQGYLEAPWALTYANAERLLDMRDEELMLLNAEVTGELPPDLEFEEYSELRERLAALIEQELQVYRQEQRPLDLGRVLREYLARYPRQRHFDMARILVDQAVRLGVAEADFNGLQAQWQAINEYGAKVQAHVIDKY.

The segment at 208–236 is leucine-zipper; sequence LSETSGTLRELQDTLEAAGDKLQANLLRI.

It belongs to the MukF family. Interacts, and probably forms a ternary complex, with MukE and MukB via its C-terminal region. The complex formation is stimulated by calcium or magnesium. It is required for an interaction between MukE and MukB.

The protein localises to the cytoplasm. The protein resides in the nucleoid. In terms of biological role, involved in chromosome condensation, segregation and cell cycle progression. May participate in facilitating chromosome segregation by condensation DNA from both sides of a centrally located replisome during cell division. Not required for mini-F plasmid partitioning. Probably acts via its interaction with MukB and MukE. Overexpression results in anucleate cells. It has a calcium binding activity. This is Chromosome partition protein MukF from Edwardsiella ictaluri (strain 93-146).